A 728-amino-acid chain; its full sequence is Cellulose synthase-like protein E6 (728 aa).

2 helical membrane passes run 21–43 (AVYR…YRAT) and 53–73 (AAWL…VITQ). Active-site residues include D141 and D446. The next 5 helical transmembrane spans lie at 523–543 (LWAA…LGLV), 546–566 (TPLF…VFCV), 646–666 (PEFV…VAGL), 669–689 (IMAG…LIVI), and 707–727 (IPLP…LLPI).

This sequence belongs to the glycosyltransferase 2 family. Plant cellulose synthase-like E subfamily.

It localises to the golgi apparatus membrane. Functionally, thought to be a Golgi-localized beta-glycan synthase that polymerize the backbones of noncellulosic polysaccharides (hemicelluloses) of plant cell wall. This chain is Cellulose synthase-like protein E6 (CSLE6), found in Oryza sativa subsp. japonica (Rice).